Reading from the N-terminus, the 389-residue chain is Glutamate 5-kinase (389 aa).

K26 contributes to the ATP binding site. Substrate is bound by residues S66, D153, and N167. Position 187-188 (187-188 (TD)) interacts with ATP. Residues 293-371 (AGTLFLDQGA…EQIEWILGHR (79 aa)) form the PUA domain.

It belongs to the glutamate 5-kinase family.

Its subcellular location is the cytoplasm. It carries out the reaction L-glutamate + ATP = L-glutamyl 5-phosphate + ADP. The protein operates within amino-acid biosynthesis; L-proline biosynthesis; L-glutamate 5-semialdehyde from L-glutamate: step 1/2. Its function is as follows. Catalyzes the transfer of a phosphate group to glutamate to form L-glutamate 5-phosphate. This chain is Glutamate 5-kinase, found in Rhodopirellula baltica (strain DSM 10527 / NCIMB 13988 / SH1).